The primary structure comprises 1220 residues: DNA-directed RNA polymerase subunit beta' (1220 aa).

Residues cysteine 61, cysteine 63, cysteine 76, and cysteine 79 each contribute to the Zn(2+) site. 3 residues coordinate Mg(2+): aspartate 450, aspartate 452, and aspartate 454. A disordered region spans residues 1197–1220 (QPEVEQEPTPDIPKLDDVAKSFEE). Over residues 1209–1220 (PKLDDVAKSFEE) the composition is skewed to basic and acidic residues.

This sequence belongs to the RNA polymerase beta' chain family. The RNAP catalytic core consists of 2 alpha, 1 beta, 1 beta' and 1 omega subunit. When a sigma factor is associated with the core the holoenzyme is formed, which can initiate transcription. The cofactor is Mg(2+). Zn(2+) is required as a cofactor.

The catalysed reaction is RNA(n) + a ribonucleoside 5'-triphosphate = RNA(n+1) + diphosphate. DNA-dependent RNA polymerase catalyzes the transcription of DNA into RNA using the four ribonucleoside triphosphates as substrates. The sequence is that of DNA-directed RNA polymerase subunit beta' from Leuconostoc citreum (strain KM20).